The primary structure comprises 231 residues: NADH-ubiquinone oxidoreductase chain 4 (231 aa).

6 helical membrane passes run 1–21, 34–54, 61–80, 85–107, 128–148, and 169–189; these read PIAG…YGII, MFLP…LTCL, SLIA…AIII, GLAG…FCLA, ILPM…AIPP, and TIIL…HMFL.

This sequence belongs to the complex I subunit 4 family.

It localises to the mitochondrion membrane. It catalyses the reaction a ubiquinone + NADH + 5 H(+)(in) = a ubiquinol + NAD(+) + 4 H(+)(out). Its function is as follows. Core subunit of the mitochondrial membrane respiratory chain NADH dehydrogenase (Complex I) that is believed to belong to the minimal assembly required for catalysis. Complex I functions in the transfer of electrons from NADH to the respiratory chain. The immediate electron acceptor for the enzyme is believed to be ubiquinone. This Gloydius blomhoffii (Mamushi) protein is NADH-ubiquinone oxidoreductase chain 4 (MT-ND4).